A 362-amino-acid polypeptide reads, in one-letter code: Chorismate synthase (362 aa).

NADP(+) contacts are provided by R48 and R54. Residues 125–127, 238–239, G278, 293–297, and R319 contribute to the FMN site; these read RSS, NA, and KPTSS.

Belongs to the chorismate synthase family. Homotetramer. FMNH2 is required as a cofactor.

It carries out the reaction 5-O-(1-carboxyvinyl)-3-phosphoshikimate = chorismate + phosphate. It functions in the pathway metabolic intermediate biosynthesis; chorismate biosynthesis; chorismate from D-erythrose 4-phosphate and phosphoenolpyruvate: step 7/7. Catalyzes the anti-1,4-elimination of the C-3 phosphate and the C-6 proR hydrogen from 5-enolpyruvylshikimate-3-phosphate (EPSP) to yield chorismate, which is the branch point compound that serves as the starting substrate for the three terminal pathways of aromatic amino acid biosynthesis. This reaction introduces a second double bond into the aromatic ring system. The chain is Chorismate synthase from Psychromonas ingrahamii (strain DSM 17664 / CCUG 51855 / 37).